The following is a 509-amino-acid chain: MEFSPRAAELTTLLESRMTNFYTNFQVDEIGRVVSVGDGIARVYGLNEIQAGEMVEFASGVKGIALNLENENVGIVVFGSDTAIKEGDLVKRTGSIVDVPAGKAMLGRVVDALGVPIDGKGALSDHERRRVEVKAPGIIERKSVHEPMQTGLKAVDSLVPIGRGQRELIIGDRQTGKTAIAIDTILNQKQMNSRGTNESETLYCVYVAIGQKRSTVAQLVQILSEANALEYSILVAATASDPAPLQFLAPYSGCAMGEYFRDNGMHALIIYDDLSKQAVAYRQMSLLLRRPPGREAFPGDVFYLHSRLLERAAKRSDQTGAGSLTALPVIETQAGDVSAYIPTNVISITDGQICLETELFYRGIRPAINVGLSVSRVGSAAQLKAMKQVCGSLKLELAQYREVAAFAQFGSDLDAATQALLNRGARLTEVSKQPQYEPLPIEKQIVVIYAAVNGFCDRMPLDRISQYEKAILSTINPELLKSFNEKGGLTNERKIELDAFLKQTAKEIN.

171–178 (GDRQTGKT) is a binding site for ATP.

This sequence belongs to the ATPase alpha/beta chains family. In terms of assembly, F-type ATPases have 2 components, CF(1) - the catalytic core - and CF(0) - the membrane proton channel. CF(1) has five subunits: alpha(3), beta(3), gamma(1), delta(1), epsilon(1). CF(0) has three main subunits: a, b and c.

It localises to the mitochondrion. The protein resides in the mitochondrion inner membrane. Functionally, mitochondrial membrane ATP synthase (F(1)F(0) ATP synthase or Complex V) produces ATP from ADP in the presence of a proton gradient across the membrane which is generated by electron transport complexes of the respiratory chain. F-type ATPases consist of two structural domains, F(1) - containing the extramembraneous catalytic core, and F(0) - containing the membrane proton channel, linked together by a central stalk and a peripheral stalk. During catalysis, ATP synthesis in the catalytic domain of F(1) is coupled via a rotary mechanism of the central stalk subunits to proton translocation. Subunits alpha and beta form the catalytic core in F(1). Rotation of the central stalk against the surrounding alpha(3)beta(3) subunits leads to hydrolysis of ATP in three separate catalytic sites on the beta subunits. Subunit alpha does not bear the catalytic high-affinity ATP-binding sites. The sequence is that of ATP synthase subunit alpha, mitochondrial (ATPA) from Oryza sativa subsp. indica (Rice).